The following is a 409-amino-acid chain: Putative fatty acyl-CoA reductase 7 (409 aa).

This sequence belongs to the fatty acyl-CoA reductase family.

The chain is Putative fatty acyl-CoA reductase 7 (FAR7) from Arabidopsis thaliana (Mouse-ear cress).